The chain runs to 68 residues: Small ribosomal subunit protein bS18c (68 aa).

The protein belongs to the bacterial ribosomal protein bS18 family. As to quaternary structure, part of the 30S ribosomal subunit.

The protein resides in the plastid. It localises to the chloroplast. The protein is Small ribosomal subunit protein bS18c (rps18) of Cyanidium caldarium (Red alga).